The following is a 391-amino-acid chain: Toluene efflux pump periplasmic linker protein TtgG (391 aa).

A signal peptide spans 1 to 32 (MRAERWSQTVRQIRSPRALRVIPLTALMLISG). A lipid anchor (N-palmitoyl cysteine) is attached at Cys33. Cys33 carries the S-diacylglycerol cysteine lipid modification. Residues 107–136 (RTYEAQLRRAEANRTSAQNLARRYETLLKT) are a coiled coil.

It belongs to the membrane fusion protein (MFP) (TC 8.A.1) family.

It is found in the cell inner membrane. Functionally, the periplasmic linker component of an organic solvent efflux pump. Involved in export of a number of organic solvents, including toluene and styrene. This is the most important solvent efflux pump in this strain, although it can export AMP and some antibiotics. The polypeptide is Toluene efflux pump periplasmic linker protein TtgG (ttgG) (Pseudomonas putida (strain DOT-T1E)).